We begin with the raw amino-acid sequence, 36 residues long: Peroxiredoxin-4 (36 aa).

The protein belongs to the peroxiredoxin family. AhpC/Prx1 subfamily. Homodimer; disulfide-linked, upon oxidation. Venom gland.

The protein resides in the secreted. It catalyses the reaction a hydroperoxide + [thioredoxin]-dithiol = an alcohol + [thioredoxin]-disulfide + H2O. In terms of biological role, venom peroxiredoxin enzyme that may play a role as part of a redox pathway leading to the structural/functional diversification of toxins through a disulfide bond engineering mechanism. In Crotalus atrox (Western diamondback rattlesnake), this protein is Peroxiredoxin-4.